The sequence spans 1475 residues: Sex-determining transformer protein 2 (1475 aa).

An N-terminal signal peptide occupies residues 1–31 (MKLKYNKLLVSVVIVTFVTFGLLLAECFGKS). The next 11 helical transmembrane spans lie at 446 to 466 (TIHF…IFVW), 474 to 494 (AFMF…VCST), 496 to 516 (GVIV…LANL), 589 to 609 (WGCT…FIDS), 737 to 757 (GVIL…LLFI), 902 to 922 (AVGV…LFAF), 928 to 948 (AGIF…TPTI), 952 to 972 (FLFS…VHLF), 979 to 999 (IYTN…FCAL), 1034 to 1054 (IAQF…ICSI), and 1060 to 1080 (IFFV…FNSI). The interval 1133 to 1273 (EFSIKRSSPP…RERNLMNKRS (141 aa)) is interaction with fem-3. 2 disordered regions span residues 1142 to 1194 (PCRY…GDNT) and 1267 to 1330 (NLMN…VDEP). A compositionally biased stretch (basic residues) spans 1178 to 1188 (RSPKTGNKRVR). Basic and acidic residues predominate over residues 1276–1310 (QRRESRNIEKMKKSQENLDKEKSEEKISESKKNQD). The interval 1392–1413 (CEDIYWTHRTGQLPPGLQVPRR) is MX regulatory domain; required for tra-1 binding. Residues 1424–1475 (TPPPEDLNWVPPAESPPIPIPQQAFDLLEERRRNHREQQDEAREGDLSDPEV) are disordered. Residues 1451–1469 (LEERRRNHREQQDEAREGD) are compositionally biased toward basic and acidic residues.

In terms of assembly, interacts with tra-1 and fem-3. Post-translationally, undergoes cleavage by tra-3 to produce a feminizing carboxy-terminal isoform Tra-2B. In terms of tissue distribution, somatic and germline tissues. Isoform Tra-2B is specific to oocytes.

Its subcellular location is the membrane. Its function is as follows. Plays a major role in controlling sexual cell fates. Promotes female development in XX animals where it sequesters one or more of the FEM proteins to the membrane thereby freeing the tra-1 protein (a putative transcription factor) to enter the nucleus and promote female development. In XO animals it acts as a receptor for her-1 which prevents it from binding to FEM proteins thereby repressing the activity of tra-1. Negatively regulates male development when bound to fem-3 and is required together with tra-1 for promoting spermatogenesis. Also required for feminizing tra-3 activity. In Caenorhabditis elegans, this protein is Sex-determining transformer protein 2 (tra-2).